Consider the following 690-residue polypeptide: Proprotein convertase subtilisin/kexin type 9 (690 aa).

An N-terminal signal peptide occupies residues 1-28 (MGTVSSRRSWWPLPLLLLLLLGPAGARA). A propeptide spanning residues 29-150 (QEDEDGDYEE…IEEDSSVFAQ (122 aa)) is cleaved from the precursor. Position 36 is a sulfotyrosine (tyrosine 36). The residue at position 45 (serine 45) is a Phosphoserine. In terms of domain architecture, Inhibitor I9 spans 75–147 (TYVVVLKEET…VDYIEEDSSV (73 aa)). The Peptidase S8 domain occupies 153–459 (PWNLERITPP…GWQLFCRTVW (307 aa)). Residues aspartate 184 and histidine 224 each act as charge relay system in the active site. Disulfide bonds link cysteine 221–cysteine 253 and cysteine 321–cysteine 356. The active-site Charge relay system is the serine 384. The tract at residues 448-690 (GAGWQLFCRT…HLVQASQELQ (243 aa)) is C-terminal domain. 3 disulfides stabilise this stretch: cysteine 455–cysteine 525, cysteine 475–cysteine 524, and cysteine 484–cysteine 507. Residue asparagine 531 is glycosylated (N-linked (GlcNAc...) asparagine). 6 disulfide bridges follow: cysteine 532/cysteine 599, cysteine 550/cysteine 598, cysteine 560/cysteine 586, cysteine 606/cysteine 677, cysteine 624/cysteine 676, and cysteine 633/cysteine 652. Serine 686 carries the post-translational modification Phosphoserine.

The protein belongs to the peptidase S8 family. In terms of assembly, monomer. Can self-associate to form dimers and higher multimers which may have increased LDLR degrading activity. The precursor protein but not the mature protein may form multimers. Interacts with APOB, VLDLR, LRP8/APOER2 and BACE1. The full-length immature form (pro-PCSK9) interacts with SCNN1A, SCNN1B and SCNN1G. The pro-PCSK9 form (via C-terminal domain) interacts with LDLR. Interacts (via the C-terminal domain) with ANXA2 (via repeat Annexin 1); the interaction inhibits the degradation of LDLR. Requires Ca(2+) as cofactor. Post-translationally, cleavage by furin and PCSK5 generates a truncated inactive protein that is unable to induce LDLR degradation. In terms of processing, undergoes autocatalytic cleavage in the endoplasmic reticulum to release the propeptide from the N-terminus and the cleavage of the propeptide is strictly required for its maturation and activation. The cleaved propeptide however remains associated with the catalytic domain through non-covalent interactions, preventing potential substrates from accessing its active site. As a result, it is secreted from cells as a propeptide-containing, enzymatically inactive protein. Phosphorylation protects the propeptide against proteolysis.

The protein resides in the cytoplasm. The protein localises to the secreted. It is found in the endosome. Its subcellular location is the lysosome. It localises to the cell surface. The protein resides in the endoplasmic reticulum. The protein localises to the golgi apparatus. Its activity is regulated as follows. Its proteolytic activity is autoinhibited by the non-covalent binding of the propeptide to the catalytic domain. Inhibited by EGTA. Functionally, crucial player in the regulation of plasma cholesterol homeostasis. Binds to low-density lipid receptor family members: low density lipoprotein receptor (LDLR), very low density lipoprotein receptor (VLDLR), apolipoprotein E receptor (LRP1/APOER) and apolipoprotein receptor 2 (LRP8/APOER2), and promotes their degradation in intracellular acidic compartments. Acts via a non-proteolytic mechanism to enhance the degradation of the hepatic LDLR through a clathrin LDLRAP1/ARH-mediated pathway. May prevent the recycling of LDLR from endosomes to the cell surface or direct it to lysosomes for degradation. Can induce ubiquitination of LDLR leading to its subsequent degradation. Inhibits intracellular degradation of APOB via the autophagosome/lysosome pathway in a LDLR-independent manner. Involved in the disposal of non-acetylated intermediates of BACE1 in the early secretory pathway. Inhibits epithelial Na(+) channel (ENaC)-mediated Na(+) absorption by reducing ENaC surface expression primarily by increasing its proteasomal degradation. Regulates neuronal apoptosis via modulation of LRP8/APOER2 levels and related anti-apoptotic signaling pathways. This is Proprotein convertase subtilisin/kexin type 9 (PCSK9) from Gorilla gorilla gorilla (Western lowland gorilla).